Consider the following 103-residue polypeptide: Phosphoribosyl-ATP pyrophosphatase (103 aa).

It belongs to the PRA-PH family.

The protein localises to the cytoplasm. The catalysed reaction is 1-(5-phospho-beta-D-ribosyl)-ATP + H2O = 1-(5-phospho-beta-D-ribosyl)-5'-AMP + diphosphate + H(+). It functions in the pathway amino-acid biosynthesis; L-histidine biosynthesis; L-histidine from 5-phospho-alpha-D-ribose 1-diphosphate: step 2/9. The sequence is that of Phosphoribosyl-ATP pyrophosphatase from Listeria monocytogenes serotype 4b (strain CLIP80459).